The sequence spans 124 residues: Probable glycine cleavage system H protein (124 aa).

A Lipoyl-binding domain is found at Thr-22–Asp-104. N6-lipoyllysine is present on Lys-63.

This sequence belongs to the GcvH family. In terms of assembly, the glycine cleavage system is composed of four proteins: P, T, L and H. Requires (R)-lipoate as cofactor.

Functionally, the glycine cleavage system catalyzes the degradation of glycine. The H protein shuttles the methylamine group of glycine from the P protein to the T protein. This chain is Probable glycine cleavage system H protein, found in Halobacterium salinarum (strain ATCC 700922 / JCM 11081 / NRC-1) (Halobacterium halobium).